The chain runs to 388 residues: Xylose isomerase (388 aa).

Active-site residues include His-54 and Asp-57. Mg(2+) contacts are provided by Glu-181, Glu-217, His-220, Asp-245, Asp-255, Asp-257, and Asp-287.

Belongs to the xylose isomerase family. In terms of assembly, homotetramer. It depends on Mg(2+) as a cofactor.

It localises to the cytoplasm. The catalysed reaction is alpha-D-xylose = alpha-D-xylulofuranose. The sequence is that of Xylose isomerase from Streptomyces corchorusii (Streptomyces chibaensis).